A 218-amino-acid polypeptide reads, in one-letter code: Small ribosomal subunit protein uS3c (218 aa).

Residues 47–118 enclose the KH type-2 domain; it reads VQKNMRIFSG…KLNIAITRIG (72 aa).

It belongs to the universal ribosomal protein uS3 family. In terms of assembly, part of the 30S ribosomal subunit.

It localises to the plastid. It is found in the chloroplast. This is Small ribosomal subunit protein uS3c (rps3) from Cucumis sativus (Cucumber).